Reading from the N-terminus, the 617-residue chain is UvrABC system protein C (617 aa).

Positions Asn-22 to Ile-100 constitute a GIY-YIG domain. One can recognise a UVR domain in the interval Asp-209–Met-244.

This sequence belongs to the UvrC family. In terms of assembly, interacts with UvrB in an incision complex.

Its subcellular location is the cytoplasm. In terms of biological role, the UvrABC repair system catalyzes the recognition and processing of DNA lesions. UvrC both incises the 5' and 3' sides of the lesion. The N-terminal half is responsible for the 3' incision and the C-terminal half is responsible for the 5' incision. The chain is UvrABC system protein C from Neisseria meningitidis serogroup B (strain ATCC BAA-335 / MC58).